The chain runs to 861 residues: Probable beta-glucosidase A (861 aa).

The signal sequence occupies residues 1-19 (MKLGWIEVAALAAASVVSA). N-linked (GlcNAc...) asparagine glycans are attached at residues Asn62, Asn212, and Asn253. Residue Asp281 is part of the active site. Asn316, Asn323, Asn355, Asn443, Asn524, Asn543, Asn565, Asn669, and Asn713 each carry an N-linked (GlcNAc...) asparagine glycan. The interval 730-754 (DSKYIPEGATDGSAQPRLPASGGAG) is disordered. A glycan (N-linked (GlcNAc...) asparagine) is linked at Asn846.

The protein belongs to the glycosyl hydrolase 3 family.

It is found in the secreted. It catalyses the reaction Hydrolysis of terminal, non-reducing beta-D-glucosyl residues with release of beta-D-glucose.. It functions in the pathway glycan metabolism; cellulose degradation. Its function is as follows. Beta-glucosidases are one of a number of cellulolytic enzymes involved in the degradation of cellulosic biomass. Catalyzes the last step releasing glucose from the inhibitory cellobiose. The sequence is that of Probable beta-glucosidase A (bglA) from Aspergillus oryzae (strain ATCC 42149 / RIB 40) (Yellow koji mold).